Here is a 147-residue protein sequence, read N- to C-terminus: Hemoglobin subunit beta (147 aa).

A Globin domain is found at 3 to 147; sequence EWTDDERAII…VVSALGRQYH (145 aa). H64 and H93 together coordinate heme b.

It belongs to the globin family. Heterotetramer of two alpha chains and two beta chains. Red blood cells.

Functionally, involved in oxygen transport from gills to the various peripheral tissues. The sequence is that of Hemoglobin subunit beta (hbb) from Melanogrammus aeglefinus (Haddock).